Here is a 190-residue protein sequence, read N- to C-terminus: Crossover junction endodeoxyribonuclease RuvC (190 aa).

Residues Asp7, Glu68, and Asp141 contribute to the active site. Mg(2+)-binding residues include Asp7, Glu68, and Asp141.

It belongs to the RuvC family. Homodimer which binds Holliday junction (HJ) DNA. The HJ becomes 2-fold symmetrical on binding to RuvC with unstacked arms; it has a different conformation from HJ DNA in complex with RuvA. In the full resolvosome a probable DNA-RuvA(4)-RuvB(12)-RuvC(2) complex forms which resolves the HJ. Mg(2+) serves as cofactor.

It localises to the cytoplasm. The enzyme catalyses Endonucleolytic cleavage at a junction such as a reciprocal single-stranded crossover between two homologous DNA duplexes (Holliday junction).. In terms of biological role, the RuvA-RuvB-RuvC complex processes Holliday junction (HJ) DNA during genetic recombination and DNA repair. Endonuclease that resolves HJ intermediates. Cleaves cruciform DNA by making single-stranded nicks across the HJ at symmetrical positions within the homologous arms, yielding a 5'-phosphate and a 3'-hydroxyl group; requires a central core of homology in the junction. The consensus cleavage sequence is 5'-(A/T)TT(C/G)-3'. Cleavage occurs on the 3'-side of the TT dinucleotide at the point of strand exchange. HJ branch migration catalyzed by RuvA-RuvB allows RuvC to scan DNA until it finds its consensus sequence, where it cleaves and resolves the cruciform DNA. The chain is Crossover junction endodeoxyribonuclease RuvC from Endomicrobium trichonymphae.